The sequence spans 92 residues: Small ribosomal subunit protein uS19 (92 aa).

The protein belongs to the universal ribosomal protein uS19 family.

Protein S19 forms a complex with S13 that binds strongly to the 16S ribosomal RNA. The sequence is that of Small ribosomal subunit protein uS19 from Lachnoclostridium phytofermentans (strain ATCC 700394 / DSM 18823 / ISDg) (Clostridium phytofermentans).